The following is a 195-amino-acid chain: Putative archaetidylserine decarboxylase proenzyme (195 aa).

Ser159 serves as the catalytic Schiff-base intermediate with substrate; via pyruvic acid. At Ser159 the chain carries Pyruvic acid (Ser); by autocatalysis.

This sequence belongs to the phosphatidylserine decarboxylase family. PSD-A subfamily. Heterodimer of a large membrane-associated beta subunit and a small pyruvoyl-containing alpha subunit. Requires pyruvate as cofactor. Is synthesized initially as an inactive proenzyme. Formation of the active enzyme involves a self-maturation process in which the active site pyruvoyl group is generated from an internal serine residue via an autocatalytic post-translational modification. Two non-identical subunits are generated from the proenzyme in this reaction, and the pyruvate is formed at the N-terminus of the alpha chain, which is derived from the carboxyl end of the proenzyme. The autoendoproteolytic cleavage occurs by a canonical serine protease mechanism, in which the side chain hydroxyl group of the serine supplies its oxygen atom to form the C-terminus of the beta chain, while the remainder of the serine residue undergoes an oxidative deamination to produce ammonia and the pyruvoyl prosthetic group on the alpha chain. During this reaction, the Ser that is part of the protease active site of the proenzyme becomes the pyruvoyl prosthetic group, which constitutes an essential element of the active site of the mature decarboxylase. Post-translationally, is synthesized initially as an inactive proenzyme. Formation of the active enzyme involves a self-maturation process in which the active site pyruvoyl group is generated from an internal serine residue via an autocatalytic post-translational modification. Two non-identical subunits are generated from the proenzyme in this reaction, and the pyruvate is formed at the N-terminus of the alpha chain, which is derived from the carboxyl end of the proenzyme. The post-translation cleavage follows an unusual pathway, termed non-hydrolytic serinolysis, in which the side chain hydroxyl group of the serine supplies its oxygen atom to form the C-terminus of the beta chain, while the remainder of the serine residue undergoes an oxidative deamination to produce ammonia and the pyruvoyl prosthetic group on the alpha chain.

Its subcellular location is the cell membrane. The catalysed reaction is archaetidylserine + H(+) = archaetidylethanolamine + CO2. In terms of biological role, catalyzes the formation of archaetidylethanolamine (PtdEtn) from archaetidylserine (PtdSer). The sequence is that of Putative archaetidylserine decarboxylase proenzyme from Archaeoglobus fulgidus (strain ATCC 49558 / DSM 4304 / JCM 9628 / NBRC 100126 / VC-16).